The sequence spans 95 residues: Small ribosomal subunit protein uS17 (95 aa).

The protein belongs to the universal ribosomal protein uS17 family. As to quaternary structure, part of the 30S ribosomal subunit.

In terms of biological role, one of the primary rRNA binding proteins, it binds specifically to the 5'-end of 16S ribosomal RNA. The polypeptide is Small ribosomal subunit protein uS17 (Synechococcus sp. (strain CC9902)).